The following is a 93-amino-acid chain: U12-lycotoxin-Ls1a (93 aa).

The N-terminal stretch at 1–18 (MKFAVILLFSLVVLTVAS) is a signal peptide. The propeptide occupies 19 to 38 (ESVEEVRREIDIEDLPEQQR).

Belongs to the neurotoxin 31 family. Contains 5 disulfide bonds. In terms of tissue distribution, expressed by the venom gland.

The protein localises to the secreted. In Lycosa singoriensis (Wolf spider), this protein is U12-lycotoxin-Ls1a.